A 350-amino-acid polypeptide reads, in one-letter code: Twinfilin-1 (350 aa).

Position 2 is an N-acetylserine (S2). An ADF-H 1 domain is found at S2–L139. Residues S143 and S277 each carry the phosphoserine modification. The 139-residue stretch at L175 to H313 folds into the ADF-H 2 domain. Y309 bears the Phosphotyrosine mark. The disordered stretch occupies residues Q316–D350. T349 carries the phosphothreonine modification.

The protein belongs to the actin-binding proteins ADF family. Twinfilin subfamily. As to quaternary structure, interacts with G-actin; ADP-actin form and capping protein (CP). May also be able to interact with TWF2 and phosphoinositides, PI(4,5)P2. When bound to PI(4,5)P2, it is down-regulated. Interacts with ACTG1. Phosphorylated on serine and threonine residues.

The protein resides in the cytoplasm. The protein localises to the cytoskeleton. Functionally, actin-binding protein involved in motile and morphological processes. Inhibits actin polymerization, likely by sequestering G-actin. By capping the barbed ends of filaments, it also regulates motility. Seems to play an important role in clathrin-mediated endocytosis and distribution of endocytic organelles. The chain is Twinfilin-1 (Twf1) from Rattus norvegicus (Rat).